We begin with the raw amino-acid sequence, 240 residues long: Dihydromonapterin reductase (240 aa).

Tyr-152 serves as the catalytic Proton acceptor.

The protein belongs to the short-chain dehydrogenases/reductases (SDR) family. FolM subfamily.

It carries out the reaction (6S)-5,6,7,8-tetrahydrofolate + NADP(+) = 7,8-dihydrofolate + NADPH + H(+). It catalyses the reaction 7,8-dihydromonapterin + NADPH + H(+) = 5,6,7,8-tetrahydromonapterin + NADP(+). Functionally, catalyzes the reduction of dihydromonapterin to tetrahydromonapterin. Also has lower activity with dihydrofolate. The chain is Dihydromonapterin reductase (folM) from Escherichia coli O139:H28 (strain E24377A / ETEC).